The chain runs to 207 residues: Probable GTP-binding protein EngB (207 aa).

The 173-residue stretch at 22 to 194 (DLPEVAFAGR…LQRLDVALSD (173 aa)) folds into the EngB-type G domain. GTP is bound by residues 30-37 (GRSNVGKS), 57-61 (GRTQL), 75-78 (DLPG), 142-145 (TKVD), and 173-175 (FSA). Residues Ser-37 and Thr-59 each coordinate Mg(2+).

This sequence belongs to the TRAFAC class TrmE-Era-EngA-EngB-Septin-like GTPase superfamily. EngB GTPase family. Requires Mg(2+) as cofactor.

In terms of biological role, necessary for normal cell division and for the maintenance of normal septation. The polypeptide is Probable GTP-binding protein EngB (Syntrophotalea carbinolica (strain DSM 2380 / NBRC 103641 / GraBd1) (Pelobacter carbinolicus)).